The chain runs to 210 residues: tRNA (guanine-N(7)-)-methyltransferase (210 aa).

S-adenosyl-L-methionine-binding residues include glutamate 43, glutamate 68, aspartate 95, and aspartate 117. Residue aspartate 117 is part of the active site. Residues lysine 121, aspartate 153, and 190–193 (TEYE) each bind substrate.

Belongs to the class I-like SAM-binding methyltransferase superfamily. TrmB family.

The catalysed reaction is guanosine(46) in tRNA + S-adenosyl-L-methionine = N(7)-methylguanosine(46) in tRNA + S-adenosyl-L-homocysteine. It functions in the pathway tRNA modification; N(7)-methylguanine-tRNA biosynthesis. Its function is as follows. Catalyzes the formation of N(7)-methylguanine at position 46 (m7G46) in tRNA. The protein is tRNA (guanine-N(7)-)-methyltransferase of Macrococcus caseolyticus (strain JCSC5402) (Macrococcoides caseolyticum).